Reading from the N-terminus, the 138-residue chain is Large ribosomal subunit protein uL16 (138 aa).

Residues 1-13 (MLQPKRRKYRKEQ) are compositionally biased toward basic residues. The tract at residues 1-22 (MLQPKRRKYRKEQKGRNTGVAT) is disordered.

It belongs to the universal ribosomal protein uL16 family. Part of the 50S ribosomal subunit.

Functionally, binds 23S rRNA and is also seen to make contacts with the A and possibly P site tRNAs. This chain is Large ribosomal subunit protein uL16, found in Paraburkholderia phymatum (strain DSM 17167 / CIP 108236 / LMG 21445 / STM815) (Burkholderia phymatum).